We begin with the raw amino-acid sequence, 257 residues long: Ribosomal RNA small subunit methyltransferase J (257 aa).

S-adenosyl-L-methionine contacts are provided by residues 107-108 (RD), 123-124 (ER), and Asp-177.

This sequence belongs to the methyltransferase superfamily. RsmJ family.

Its subcellular location is the cytoplasm. It catalyses the reaction guanosine(1516) in 16S rRNA + S-adenosyl-L-methionine = N(2)-methylguanosine(1516) in 16S rRNA + S-adenosyl-L-homocysteine + H(+). Its function is as follows. Specifically methylates the guanosine in position 1516 of 16S rRNA. The sequence is that of Ribosomal RNA small subunit methyltransferase J from Haemophilus influenzae (strain PittEE).